A 698-amino-acid chain; its full sequence is Inner centromere protein SLI15 (698 aa).

Phosphoserine is present on S268. Disordered stretches follow at residues 365 to 390, 405 to 444, and 455 to 474; these read KNKITKNNSPKGKNSRKSSIPRFDKT, EQKKKSKHSSDVHKTGSRPHSISPTKISVDSSSPSKEVKN, and RPTKASISPNKNKNLTTSQT. Composition is skewed to polar residues over residues 422–439 and 459–474; these read RPHSISPTKISVDSSSPS and ASISPNKNKNLTTSQT. The residue at position 489 (S489) is a Phosphoserine. Residues 535 to 560 form a disordered region; that stretch reads IMRSQQEHHRRKQEKQKRMSHLEQDL. The segment covering 550 to 560 has biased composition (basic and acidic residues); the sequence is QKRMSHLEQDL.

Belongs to the INCENP family. In terms of assembly, component of the CPC complex at least composed of IPL1, BIR1 and SLI15. Phosphorylated by serine/threonine protein kinase IPL1.

Its subcellular location is the nucleus. It is found in the cytoplasm. The protein resides in the cytoskeleton. The protein localises to the spindle. It localises to the chromosome. Its subcellular location is the centromere. It is found in the kinetochore. Its function is as follows. Component of the chromosomal passenger complex (CPC), a complex that acts as a key regulator of mitosis. Stimulates IPL1 kinase activity and facilitates its association with the mitotic spindle. Has a role in attaching the kinetochores to the microtubules and ensuring that sister kinetochores connect to opposite poles. This chain is Inner centromere protein SLI15 (SLI15), found in Saccharomyces cerevisiae (strain ATCC 204508 / S288c) (Baker's yeast).